The chain runs to 308 residues: Acetyl-coenzyme A carboxylase carboxyl transferase subunit beta 1 (308 aa).

Residues 25–294 (VWTKCTSCEQ…PMVVSVNESP (270 aa)) form the CoA carboxyltransferase N-terminal domain. Residues cysteine 29, cysteine 32, cysteine 48, and cysteine 51 each coordinate Zn(2+). A C4-type zinc finger spans residues 29-51 (CTSCEQVLYHAELERNLEVCPKC). The disordered stretch occupies residues 289–308 (SVNESPNEEPYSVPEADEKG).

The protein belongs to the AccD/PCCB family. In terms of assembly, acetyl-CoA carboxylase is a heterohexamer composed of biotin carboxyl carrier protein (AccB), biotin carboxylase (AccC) and two subunits each of ACCase subunit alpha (AccA) and ACCase subunit beta (AccD). Zn(2+) is required as a cofactor.

It is found in the cytoplasm. The catalysed reaction is N(6)-carboxybiotinyl-L-lysyl-[protein] + acetyl-CoA = N(6)-biotinyl-L-lysyl-[protein] + malonyl-CoA. The protein operates within lipid metabolism; malonyl-CoA biosynthesis; malonyl-CoA from acetyl-CoA: step 1/1. Its function is as follows. Component of the acetyl coenzyme A carboxylase (ACC) complex. Biotin carboxylase (BC) catalyzes the carboxylation of biotin on its carrier protein (BCCP) and then the CO(2) group is transferred by the transcarboxylase to acetyl-CoA to form malonyl-CoA. This chain is Acetyl-coenzyme A carboxylase carboxyl transferase subunit beta 1, found in Vibrio campbellii (strain ATCC BAA-1116).